Consider the following 277-residue polypeptide: MSMKDLKISQLIVKHYFQKLNDVLNVDVAIAGCGPSALALATELAKNGRKVAIFEAKNEPGGGIWGGGMMFNELVLESELEWYLKEHHIKYKKEDEFIVVDAVHFASAMLYNATKNGAYIFNNVFVEDLVMYNERISGVVINWMPTIKEKLHVDPITVVAKFTVDGTGHPANLVRLLSKRGIINSVKGSSENLCSCGVVEYEFPMDAENGEKFVVENTKEIYPGLYVMGMAAVSVGGGPRMGPIFGGMIMSGLRAAELIEEELKRIETSEDKMWVRV.

NAD(+) contacts are provided by residues Ser36, Gly63, Val126, and 152-154 (HVD). Residues Asp154 and His169 each coordinate Fe cation. Residue Met230 participates in NAD(+) binding. Residue Arg240 participates in glycine binding.

The protein belongs to the THI4 family. As to quaternary structure, homooctamer; tetramer of dimers. Requires Fe(2+) as cofactor.

It carries out the reaction hydrogen sulfide + glycine + NAD(+) = ADP-5-ethyl-4-methylthiazole-2-carboxylate + nicotinamide + 3 H2O + H(+). Its pathway is cofactor biosynthesis; thiamine diphosphate biosynthesis. Functionally, involved in the biosynthesis of the thiazole moiety of thiamine. Catalyzes the conversion of NAD and glycine to adenosine diphosphate 5-(2-hydroxyethyl)-4-methylthiazole-2-carboxylate (ADT), an adenylated thiazole intermediate, using free sulfide as a source of sulfur. This is Thiamine thiazole synthase from Fervidobacterium nodosum (strain ATCC 35602 / DSM 5306 / Rt17-B1).